A 620-amino-acid chain; its full sequence is Chaperone protein HscA homolog (620 aa).

It belongs to the heat shock protein 70 family.

Functionally, chaperone involved in the maturation of iron-sulfur cluster-containing proteins. Has a low intrinsic ATPase activity which is markedly stimulated by HscB. In Shewanella baltica (strain OS155 / ATCC BAA-1091), this protein is Chaperone protein HscA homolog.